A 208-amino-acid chain; its full sequence is MARYTGPHCRQCRREGLKLYLKGDRCYTGKCAIDRRSYAPGQHGQGRKKVSEYGIQLRAKQKARRIYGVLEKPFRNYFEHAERQPGITGENLLRLLERRLDNVVYRLGLGASRVEARQLVRHGHFTVNGKKVNIPSFQVRVGDEIAVREKSKASPRIKELVERAADRTTPAWLEYDGQEAKGRVIALPSRDQIDAPVEEHLIVELYSR.

An S4 RNA-binding domain is found at 98-161; that stretch reads RRLDNVVYRL…KASPRIKELV (64 aa).

It belongs to the universal ribosomal protein uS4 family. In terms of assembly, part of the 30S ribosomal subunit. Contacts protein S5. The interaction surface between S4 and S5 is involved in control of translational fidelity.

Functionally, one of the primary rRNA binding proteins, it binds directly to 16S rRNA where it nucleates assembly of the body of the 30S subunit. With S5 and S12 plays an important role in translational accuracy. The protein is Small ribosomal subunit protein uS4 of Desulforamulus reducens (strain ATCC BAA-1160 / DSM 100696 / MI-1) (Desulfotomaculum reducens).